The primary structure comprises 343 residues: Cytoplasmic tRNA 2-thiolation protein 1 (343 aa).

It belongs to the TtcA family. CTU1/NCS6/ATPBD3 subfamily.

The protein resides in the cytoplasm. It participates in tRNA modification; 5-methoxycarbonylmethyl-2-thiouridine-tRNA biosynthesis. Its function is as follows. Plays a central role in 2-thiolation of mcm(5)S(2)U at tRNA wobble positions of tRNA(Lys), tRNA(Glu) and tRNA(Gln). Directly binds tRNAs and probably acts by catalyzing adenylation of tRNAs, an intermediate required for 2-thiolation. It is unclear whether it acts as a sulfurtransferase that transfers sulfur from thiocarboxylated URM1 onto the uridine of tRNAs at wobble position. In Drosophila willistoni (Fruit fly), this protein is Cytoplasmic tRNA 2-thiolation protein 1.